A 727-amino-acid polypeptide reads, in one-letter code: Sodium-dependent neutral amino acid transporter SLC6A17 (727 aa).

Over 1-69 the chain is Cytoplasmic; the sequence is MPKNSKVTQR…RPAWNSKLQY (69 aa). Serine 13 and serine 20 each carry phosphoserine. The chain crosses the membrane as a helical span at residues 70–90; it reads ILAQIGFSVGLGNIWRFPYLC. Over 91-95 the chain is Extracellular; the sequence is QKNGG. A helical transmembrane segment spans residues 96 to 116; that stretch reads GAYLVPYLVLLIIIGIPLFFL. The Cytoplasmic segment spans residues 117–147; sequence ELAVGQRIRRGSIGVWHYICPRLGGIGFSSC. Residues 148–168 traverse the membrane as a helical segment; sequence IVCLFVGLYYNVIIGWSIFYF. At 169 to 222 the chain is on the extracellular side; it reads FKSFQYPLPWSECPVVRNGSVAVVEAECEKSSATTYFWYREALDISDSISESGG. Asparagine 186 is a glycosylation site (N-linked (GlcNAc...) asparagine). The chain crosses the membrane as a helical span at residues 223-243; sequence LNWKMTLCLLVAWSIVGMAVV. Over 244–253 the chain is Cytoplasmic; it reads KGIQSSGKVM. Residues 254 to 274 traverse the membrane as a helical segment; sequence YFSSLFPYVVLACFLVRGLLL. Residues 275 to 300 are Extracellular-facing; the sequence is RGAVDGILHMFTPKLDKMLDPQVWRE. The chain crosses the membrane as a helical span at residues 301 to 321; it reads AATQVFFALGLGFGGVIAFSS. The Cytoplasmic portion of the chain corresponds to 322 to 334; the sequence is YNKQDNNCHFDAA. The chain crosses the membrane as a helical span at residues 335–355; the sequence is LVSFINFFTSVLATLVVFAVL. Over 356-460 the chain is Extracellular; that stretch reads GFKANIMNEK…HFPASPFWSV (105 aa). Residue tyrosine 377 is modified to Phosphotyrosine. Asparagine 393 is a glycosylation site (N-linked (GlcNAc...) asparagine). A helical transmembrane segment spans residues 461–481; the sequence is MFFLMLINLGLGSMIGTMAGI. Over 482 to 490 the chain is Cytoplasmic; the sequence is TTPIIDTFK. The chain crosses the membrane as a helical span at residues 491-511; the sequence is VPKEMFTVGCCVFAFLVGLLF. At 512–527 the chain is on the extracellular side; that stretch reads VQRSGNYFVTMFDDYS. Residues 528 to 548 traverse the membrane as a helical segment; it reads ATLPLTLIVILENIAVAWIYG. The Cytoplasmic portion of the chain corresponds to 549–573; it reads TKKFMQELTEMLGFRPYRFYFYMWK. A helical transmembrane segment spans residues 574–594; the sequence is FVSPLCMAVLTTASIIQLGVT. At 595-617 the chain is on the extracellular side; that stretch reads PPGYSAWIKEEAAERYLYFPNWA. A helical membrane pass occupies residues 618-638; sequence MALLITLIVVATLPIPVVFVL. Residues 639–727 lie on the Cytoplasmic side of the membrane; the sequence is RHFHLLSDGS…LLASTPESEL (89 aa). Phosphoserine is present on residues serine 665 and serine 701. Residues 680–727 form a disordered region; it reads VPSEAPSPMPTHRSYLGPGSTSPLETSGNPNGRYGSGYLLASTPESEL. Positions 698 to 709 are enriched in polar residues; that stretch reads GSTSPLETSGNP.

This sequence belongs to the sodium:neurotransmitter symporter (SNF) (TC 2.A.22) family.

Its subcellular location is the cytoplasmic vesicle. The protein localises to the secretory vesicle. It localises to the synaptic vesicle membrane. It is found in the postsynapse. The protein resides in the presynapse. The enzyme catalyses L-proline(in) + Na(+)(in) = L-proline(out) + Na(+)(out). It carries out the reaction L-leucine(in) + Na(+)(in) = L-leucine(out) + Na(+)(out). The catalysed reaction is glycine(in) + Na(+)(in) = glycine(out) + Na(+)(out). It catalyses the reaction L-alanine(in) + Na(+)(in) = L-alanine(out) + Na(+)(out). The enzyme catalyses L-glutamine(in) + Na(+)(in) = L-glutamine(out) + Na(+)(out). Synaptic vesicle transporter with apparent selectivity for neutral amino acids. The transport is sodium-coupled but chloride-independent, likely driven by the proton electrochemical gradient generated by vacuolar H(+)-ATPase in an overall electrogenic mechanism. May contribute to the synaptic uptake of neurotransmitter precursors in a process coupled in part to vesicle exocytosis. The chain is Sodium-dependent neutral amino acid transporter SLC6A17 from Homo sapiens (Human).